Consider the following 365-residue polypeptide: tRNA 2-selenouridine synthase (365 aa).

Positions 15–138 (FVNDHPIMDA…MRQFLIETID (124 aa)) constitute a Rhodanese domain. Cys-98 acts as the S-selanylcysteine intermediate in catalysis.

This sequence belongs to the SelU family. In terms of assembly, monomer.

It carries out the reaction 5-methylaminomethyl-2-thiouridine(34) in tRNA + selenophosphate + (2E)-geranyl diphosphate + H2O + H(+) = 5-methylaminomethyl-2-selenouridine(34) in tRNA + (2E)-thiogeraniol + phosphate + diphosphate. The catalysed reaction is 5-methylaminomethyl-2-thiouridine(34) in tRNA + (2E)-geranyl diphosphate = 5-methylaminomethyl-S-(2E)-geranyl-thiouridine(34) in tRNA + diphosphate. The enzyme catalyses 5-methylaminomethyl-S-(2E)-geranyl-thiouridine(34) in tRNA + selenophosphate + H(+) = 5-methylaminomethyl-2-(Se-phospho)selenouridine(34) in tRNA + (2E)-thiogeraniol. It catalyses the reaction 5-methylaminomethyl-2-(Se-phospho)selenouridine(34) in tRNA + H2O = 5-methylaminomethyl-2-selenouridine(34) in tRNA + phosphate. Involved in the post-transcriptional modification of the uridine at the wobble position (U34) of tRNA(Lys), tRNA(Glu) and tRNA(Gln). Catalyzes the conversion of 2-thiouridine (S2U-RNA) to 2-selenouridine (Se2U-RNA). Acts in a two-step process involving geranylation of 2-thiouridine (S2U) to S-geranyl-2-thiouridine (geS2U) and subsequent selenation of the latter derivative to 2-selenouridine (Se2U) in the tRNA chain. In Shewanella halifaxensis (strain HAW-EB4), this protein is tRNA 2-selenouridine synthase.